Reading from the N-terminus, the 190-residue chain is Putative manganese efflux pump MntP (190 aa).

The next 6 helical transmembrane spans lie at 3–23, 37–57, 72–88, 111–131, 138–158, and 164–184; these read FLQIFLLSIGVAADAFACSVV, LVLAGIFGVFQAAMPLIGWVI, HWIAFALLGVVGAKMIW, IILGLATSIDALAVGMGLAFV, VALSMGLITFALSLVGAWIGH, and FGKWATILGGIILIGIGANIV.

This sequence belongs to the MntP (TC 9.B.29) family.

The protein resides in the cell membrane. Probably functions as a manganese efflux pump. The chain is Putative manganese efflux pump MntP from Corynebacterium glutamicum (strain R).